Reading from the N-terminus, the 160-residue chain is Phosphopantetheine adenylyltransferase (160 aa).

Residue Ser-10 coordinates substrate. ATP is bound by residues 10–11 (SF) and His-18. Substrate contacts are provided by Lys-42, Thr-74, and Arg-88. ATP contacts are provided by residues 89 to 91 (GLR), Glu-99, and 124 to 130 (YSFISST).

The protein belongs to the bacterial CoaD family. As to quaternary structure, homohexamer. Mg(2+) is required as a cofactor.

Its subcellular location is the cytoplasm. The enzyme catalyses (R)-4'-phosphopantetheine + ATP + H(+) = 3'-dephospho-CoA + diphosphate. It participates in cofactor biosynthesis; coenzyme A biosynthesis; CoA from (R)-pantothenate: step 4/5. Reversibly transfers an adenylyl group from ATP to 4'-phosphopantetheine, yielding dephospho-CoA (dPCoA) and pyrophosphate. This is Phosphopantetheine adenylyltransferase from Leptospira borgpetersenii serovar Hardjo-bovis (strain L550).